Consider the following 354-residue polypeptide: S-adenosylmethionine-dependent nucleotide dehydratase RSAD2 (354 aa).

Positions 62–282 (AMTPTSVNYH…LDRHSSISCL (221 aa)) constitute a Radical SAM core domain. The [4Fe-4S] cluster site is built by Cys-76, Cys-80, and Cys-83.

Belongs to the radical SAM superfamily. RSAD2 family. The cofactor is [4Fe-4S] cluster. As to expression, constitutively expressed in spleen, head kidney and trunk kidney. Following viral infection, detected in most organs including liver, gill, intestine, heart, muscle and brain.

It localises to the endoplasmic reticulum membrane. In terms of biological role, interferon-inducible iron-sulfur (4FE-4S) cluster-binding antiviral protein which plays a major role in the cell antiviral state induced by type I and type II interferon. The chain is S-adenosylmethionine-dependent nucleotide dehydratase RSAD2 from Siniperca chuatsi (Mandarin fish).